A 201-amino-acid chain; its full sequence is Pyridoxal 5'-phosphate synthase subunit PdxT (201 aa).

L-glutamine is bound at residue 49-51 (GES). Cys81 acts as the Nucleophile in catalysis. Residues Arg110 and 139–140 (IR) each bind L-glutamine. Residues His180 and Glu182 each act as charge relay system in the active site.

It belongs to the glutaminase PdxT/SNO family. In the presence of PdxS, forms a dodecamer of heterodimers. Only shows activity in the heterodimer.

It catalyses the reaction aldehydo-D-ribose 5-phosphate + D-glyceraldehyde 3-phosphate + L-glutamine = pyridoxal 5'-phosphate + L-glutamate + phosphate + 3 H2O + H(+). It carries out the reaction L-glutamine + H2O = L-glutamate + NH4(+). It functions in the pathway cofactor biosynthesis; pyridoxal 5'-phosphate biosynthesis. In terms of biological role, catalyzes the hydrolysis of glutamine to glutamate and ammonia as part of the biosynthesis of pyridoxal 5'-phosphate. The resulting ammonia molecule is channeled to the active site of PdxS. The chain is Pyridoxal 5'-phosphate synthase subunit PdxT from Salinispora tropica (strain ATCC BAA-916 / DSM 44818 / JCM 13857 / NBRC 105044 / CNB-440).